A 628-amino-acid chain; its full sequence is Kinesin-like protein subito (628 aa).

Residues 28-68 (RFRPRPNKKMRLFDNIQESEEESFSEYSDTESEYKYQSSEA) form a disordered region. Residues 44–58 (QESEEESFSEYSDTE) show a composition bias toward acidic residues. Residues 87-479 (GPQVFLRLRP…LNFASIAKNI (393 aa)) form the Kinesin motor domain. 169 to 176 (GTSGSGKT) provides a ligand contact to ATP. Residues 509-612 (DYTKELEDEN…KNPASDTDIS (104 aa)) adopt a coiled-coil conformation. The disordered stretch occupies residues 596-628 (KDEIEELKNPASDTDISDDPNESKSPIEILDDD). S607 carries the post-translational modification Phosphoserine. T609 bears the Phosphothreonine mark. At S612 the chain carries Phosphoserine.

Belongs to the TRAFAC class myosin-kinesin ATPase superfamily. Kinesin family.

The protein resides in the cytoplasm. It is found in the cytoskeleton. Required during female meiosis for bipolar spindle formation in the absence of the centrosomes and chromosome homolog segregation. Also has roles in male meiosis and mitotic divisions of the early embryo. This is Kinesin-like protein subito (sub) from Drosophila melanogaster (Fruit fly).